The chain runs to 301 residues: GTPase Era (301 aa).

Positions 6–173 (KSGFVAIVGR…LEQTNANLEI (168 aa)) constitute an Era-type G domain. The segment at 14–21 (GRPNVGKS) is G1. 14-21 (GRPNVGKS) is a binding site for GTP. The interval 40–44 (QTTRN) is G2. The G3 stretch occupies residues 61 to 64 (DTPG). GTP-binding positions include 61-65 (DTPGI) and 123-126 (NKID). The segment at 123 to 126 (NKID) is G4. The interval 152 to 154 (ISA) is G5. Positions 204–282 (TREEVPHSVA…FLEIWVKVQK (79 aa)) constitute a KH type-2 domain.

It belongs to the TRAFAC class TrmE-Era-EngA-EngB-Septin-like GTPase superfamily. Era GTPase family. Monomer.

Its subcellular location is the cytoplasm. The protein localises to the cell membrane. In terms of biological role, an essential GTPase that binds both GDP and GTP, with rapid nucleotide exchange. Plays a role in 16S rRNA processing and 30S ribosomal subunit biogenesis and possibly also in cell cycle regulation and energy metabolism. The protein is GTPase Era of Listeria welshimeri serovar 6b (strain ATCC 35897 / DSM 20650 / CCUG 15529 / CIP 8149 / NCTC 11857 / SLCC 5334 / V8).